The sequence spans 648 residues: Leucine-rich repeat and WD repeat-containing protein 1 (648 aa).

4 LRR repeats span residues K22–L43, K48–S69, H70–P91, and E92–S113. The segment at V214 to G262 is disordered. A compositionally biased stretch (basic and acidic residues) spans R226–K237. A Phosphoserine modification is found at S259. WD repeat units lie at residues A392 to K432, C443 to Q482, V497 to G536, L541 to P592, and V616 to C648.

The protein belongs to the LRWD1 family. In terms of assembly, integral component of the ORC complex. Directly interacts with CDT1, GMNN and ORC2. Interacts with ORC2 only when non-ubiquitinated; this interaction prevents LRWD1 ubiquitination and degradation. Some of these interactions are regulated in a cell-cycle dependent manner. Interaction with ORC1 occurs predominantly during G1. Association with phosphorylated ORC1 during mitosis is not efficient. Interaction with CDT1 occurs during G1 phase, as well as during mitosis with phosphorylated CDT1. Interaction with GMNN occurs from G1/S to mitosis. Interaction with ORC2 is observed throughout the cell cycle. The stoichiometry of the ORCA/ORC/CDT1/GMNN complex is 1:1:1:2. Interacts with CUL4A and DDB1; this interaction may lead to ubiquitination. In terms of processing, ubiquitinated; undergoes 'Lys-48'-linked polyubiquitination leading to proteasomal degradation. Ubiquitination occurs within the WD repeats at the end of the G1 phase. Ubiquitination may be catalyzed by the CUL4-DDB1 E3 ubiquitin-protein ligase complex and other E3 ligases. In terms of tissue distribution, testis-specific.

It is found in the nucleus. The protein localises to the chromosome. The protein resides in the centromere. It localises to the telomere. Its subcellular location is the cytoplasm. It is found in the cytoskeleton. The protein localises to the microtubule organizing center. The protein resides in the centrosome. It localises to the kinetochore. Required for G1/S transition. Recruits and stabilizes the origin recognition complex (ORC) onto chromatin during G1 to establish pre-replication complex (preRC) and to heterochromatic sites in post-replicated cells. Binds a combination of DNA and histone methylation repressive marks on heterochromatin. Binds histone H3 and H4 trimethylation marks H3K9me3, H3K27me3 and H4K20me3 in a cooperative manner with DNA methylation. Required for silencing of major satellite repeats. May be important ORC2, ORC3 and ORC4 stability. The polypeptide is Leucine-rich repeat and WD repeat-containing protein 1 (LRWD1) (Mus musculus (Mouse)).